The sequence spans 595 residues: NAD-dependent protein deacetylase hst4 (595 aa).

The disordered stretch occupies residues 1-106 (MAPRKTKPAT…HLDLTPRLGF (106 aa)). Residues 9-32 (ATKPAAKPTPASTATTSSCPSPKS) are compositionally biased toward low complexity. A Deacetylase sirtuin-type domain is found at 109 to 428 (YGDQEPQLNL…SADVERVKNE (320 aa)). Residues 134–153 (GAGI…DGLF) and 222–225 (QNID) each bind NAD(+). Catalysis depends on H253, which acts as the Proton acceptor. 4 residues coordinate Zn(2+): C261, C264, C283, and C286. Residues 342–344 (GTS), 373–375 (NNE), and C394 each bind NAD(+). A compositionally biased stretch (polar residues) spans 445-473 (QAQTGMLTPSSSYDGDVENASTTTLSNPA). Residues 445–595 (QAQTGMLTPS…IPKGMGKLLD (151 aa)) are disordered. 2 stretches are compositionally biased toward basic and acidic residues: residues 478-492 (KLTE…DAPK) and 530-543 (TPEE…EHKA).

This sequence belongs to the sirtuin family. Class I subfamily. Zn(2+) is required as a cofactor.

It localises to the nucleus. It catalyses the reaction N(6)-acetyl-L-lysyl-[protein] + NAD(+) + H2O = 2''-O-acetyl-ADP-D-ribose + nicotinamide + L-lysyl-[protein]. In terms of biological role, NAD-dependent histone deacetylase, which could function in telomeric silencing, cell cycle progression and chromosome stability. This Emericella nidulans (strain FGSC A4 / ATCC 38163 / CBS 112.46 / NRRL 194 / M139) (Aspergillus nidulans) protein is NAD-dependent protein deacetylase hst4.